We begin with the raw amino-acid sequence, 197 residues long: ATP-dependent Clp protease proteolytic subunit 2 (197 aa).

Ser96 acts as the Nucleophile in catalysis. His121 is a catalytic residue.

Belongs to the peptidase S14 family. Fourteen ClpP subunits assemble into 2 heptameric rings which stack back to back to give a disk-like structure with a central cavity, resembling the structure of eukaryotic proteasomes.

The protein localises to the cytoplasm. It carries out the reaction Hydrolysis of proteins to small peptides in the presence of ATP and magnesium. alpha-casein is the usual test substrate. In the absence of ATP, only oligopeptides shorter than five residues are hydrolyzed (such as succinyl-Leu-Tyr-|-NHMec, and Leu-Tyr-Leu-|-Tyr-Trp, in which cleavage of the -Tyr-|-Leu- and -Tyr-|-Trp bonds also occurs).. In terms of biological role, cleaves peptides in various proteins in a process that requires ATP hydrolysis. Has a chymotrypsin-like activity. Plays a major role in the degradation of misfolded proteins. In Parasynechococcus marenigrum (strain WH8102), this protein is ATP-dependent Clp protease proteolytic subunit 2.